Reading from the N-terminus, the 858-residue chain is Bifunctional uridylyltransferase/uridylyl-removing enzyme (858 aa).

A uridylyltransferase region spans residues 1 to 318; the sequence is MNPTDLHPIK…FPRPESDARA (318 aa). Positions 319-674 are uridylyl-removing; the sequence is IDEEFRSLHG…VRPTEEGSGL (356 aa). The HD domain occupies 437–559; sequence VDQHTLAVIR…VKDERHLNAL (123 aa). ACT domains follow at residues 675–756 and 789–858; these read QIMV…LADV and RLSV…LAGE.

It belongs to the GlnD family. Mg(2+) is required as a cofactor.

The catalysed reaction is [protein-PII]-L-tyrosine + UTP = [protein-PII]-uridylyl-L-tyrosine + diphosphate. The enzyme catalyses [protein-PII]-uridylyl-L-tyrosine + H2O = [protein-PII]-L-tyrosine + UMP + H(+). Its activity is regulated as follows. Uridylyltransferase (UTase) activity is inhibited by glutamine, while glutamine activates uridylyl-removing (UR) activity. Modifies, by uridylylation and deuridylylation, the PII regulatory proteins (GlnB and homologs), in response to the nitrogen status of the cell that GlnD senses through the glutamine level. Under low glutamine levels, catalyzes the conversion of the PII proteins and UTP to PII-UMP and PPi, while under higher glutamine levels, GlnD hydrolyzes PII-UMP to PII and UMP (deuridylylation). Thus, controls uridylylation state and activity of the PII proteins, and plays an important role in the regulation of nitrogen assimilation and metabolism. The chain is Bifunctional uridylyltransferase/uridylyl-removing enzyme from Bordetella avium (strain 197N).